A 180-amino-acid polypeptide reads, in one-letter code: uncharacterized protein (180 aa).

A signal peptide spans M1–A21. Positions G23–A81 are disordered. Positions V27–N78 are enriched in low complexity.

This is an uncharacterized protein from Pasteurella multocida (strain Pm70).